A 161-amino-acid chain; its full sequence is 2-C-methyl-D-erythritol 2,4-cyclodiphosphate synthase (161 aa).

The a divalent metal cation site is built by Asp-8 and His-10. 4-CDP-2-C-methyl-D-erythritol 2-phosphate-binding positions include 8–10 (DVH) and 34–35 (HS). His-42 is an a divalent metal cation binding site. 4-CDP-2-C-methyl-D-erythritol 2-phosphate contacts are provided by residues 56–58 (DIG), 61–65 (FPDTD), 100–106 (AQSPKMA), 132–135 (TTEE), and Phe-139.

Belongs to the IspF family. As to quaternary structure, homotrimer. The cofactor is a divalent metal cation.

The catalysed reaction is 4-CDP-2-C-methyl-D-erythritol 2-phosphate = 2-C-methyl-D-erythritol 2,4-cyclic diphosphate + CMP. It functions in the pathway isoprenoid biosynthesis; isopentenyl diphosphate biosynthesis via DXP pathway; isopentenyl diphosphate from 1-deoxy-D-xylulose 5-phosphate: step 4/6. In terms of biological role, involved in the biosynthesis of isopentenyl diphosphate (IPP) and dimethylallyl diphosphate (DMAPP), two major building blocks of isoprenoid compounds. Catalyzes the conversion of 4-diphosphocytidyl-2-C-methyl-D-erythritol 2-phosphate (CDP-ME2P) to 2-C-methyl-D-erythritol 2,4-cyclodiphosphate (ME-CPP) with a corresponding release of cytidine 5-monophosphate (CMP). The sequence is that of 2-C-methyl-D-erythritol 2,4-cyclodiphosphate synthase from Clostridioides difficile (strain 630) (Peptoclostridium difficile).